Consider the following 506-residue polypeptide: Probable alpha-L-arabinofuranosidase B (506 aa).

The N-terminal stretch at 1-26 (MLSQPSRERAFVLALGLVVSSSLAAA) is a signal peptide. Residues 27-343 (APCDIYSSGG…ADIVAANYAV (317 aa)) form a catalytic region. 3 cysteine pairs are disulfide-bonded: Cys-29–Cys-39, Cys-89–Cys-94, and Cys-184–Cys-185. A substrate-binding site is contributed by Asp-227. The active-site Nucleophile is the Glu-229. Asn-230 is a substrate binding site. N-linked (GlcNAc...) asparagine glycosylation occurs at Asn-285. A substrate-binding site is contributed by Gly-304. Asp-305 serves as the catalytic Proton donor. The tract at residues 344-506 (TSLTSGPALT…VSWVISSGFA (163 aa)) is ABD. A disulfide bridge links Cys-409 with Cys-447. Substrate contacts are provided by His-424, Asn-426, Phe-427, Asp-443, His-471, Leu-476, and Asp-496.

The protein belongs to the glycosyl hydrolase 54 family.

Its subcellular location is the secreted. It catalyses the reaction Hydrolysis of terminal non-reducing alpha-L-arabinofuranoside residues in alpha-L-arabinosides.. It functions in the pathway glycan metabolism; L-arabinan degradation. Its function is as follows. Alpha-L-arabinofuranosidase involved in the degradation of arabinoxylan, a major component of plant hemicellulose. Able to hydrolyze 1,5-, 1,3- and 1,2-alpha-linkages not only in L-arabinofuranosyl oligosaccharides, but also in polysaccharides containing terminal non-reducing L-arabinofuranoses in side chains, like L-arabinan, arabinogalactan and arabinoxylan. This is Probable alpha-L-arabinofuranosidase B (abfB) from Aspergillus clavatus (strain ATCC 1007 / CBS 513.65 / DSM 816 / NCTC 3887 / NRRL 1 / QM 1276 / 107).